The primary structure comprises 131 residues: Small ribosomal subunit protein bS6 (131 aa).

Residues Val-96–Glu-131 are disordered. A compositionally biased stretch (basic and acidic residues) spans Lys-104–Asp-122.

It belongs to the bacterial ribosomal protein bS6 family.

In terms of biological role, binds together with bS18 to 16S ribosomal RNA. In Shewanella sp. (strain ANA-3), this protein is Small ribosomal subunit protein bS6.